We begin with the raw amino-acid sequence, 216 residues long: Ribosomal RNA small subunit methyltransferase G (216 aa).

S-adenosyl-L-methionine-binding positions include G83, M88, 134 to 135, and R149; that span reads VE.

Belongs to the methyltransferase superfamily. RNA methyltransferase RsmG family.

Its subcellular location is the cytoplasm. It carries out the reaction guanosine(527) in 16S rRNA + S-adenosyl-L-methionine = N(7)-methylguanosine(527) in 16S rRNA + S-adenosyl-L-homocysteine. In terms of biological role, specifically methylates the N7 position of guanine in position 527 of 16S rRNA. This is Ribosomal RNA small subunit methyltransferase G from Pseudomonas putida (strain GB-1).